The primary structure comprises 378 residues: Cell death-related nuclease 6 (378 aa).

The N-terminal stretch at 1–17 (MIRQIILIVSLIGISNA) is a signal peptide. Asparagine 51, asparagine 92, and asparagine 111 each carry an N-linked (GlcNAc...) asparagine glycan.

Belongs to the DNase II family.

Its function is as follows. Involved in apoptotic DNA degradation. This is Cell death-related nuclease 6 (crn-6) from Caenorhabditis elegans.